The sequence spans 158 residues: MKISLSLQQDFRSPELELKRAQLKKIIETTLRHVGYKEDCEIGIACVDLEESHQLNLQYREKDKPTNVLSFPSDIPEEVLPMLDALPLGDLVICIPVVLQEALEQKKTAQNHFAHLLVHGVLHLLGYDHETSDEDAEEMEGLEIEILAKLNIANPYQE.

Positions 119, 123, and 129 each coordinate Zn(2+).

Belongs to the endoribonuclease YbeY family. It depends on Zn(2+) as a cofactor.

It is found in the cytoplasm. In terms of biological role, single strand-specific metallo-endoribonuclease involved in late-stage 70S ribosome quality control and in maturation of the 3' terminus of the 16S rRNA. The polypeptide is Endoribonuclease YbeY (Acinetobacter baumannii (strain AB307-0294)).